We begin with the raw amino-acid sequence, 1568 residues long: Plexin-C1 (1568 aa).

The signal sequence occupies residues 1–34 (MEVSRRKAPPRPPRPAAPLPLLAYLLALAAPGRG). Positions 35 to 452 (ADEPVWRSEQ…AGKEVRRIRV (418 aa)) constitute a Sema domain. Residues 35-944 (ADEPVWRSEQ…YVEQESVPST (910 aa)) are Extracellular-facing. Cysteines 64 and 87 form a disulfide. N-linked (GlcNAc...) asparagine glycosylation is found at asparagine 86, asparagine 141, and asparagine 149. Intrachain disulfides connect cysteine 156/cysteine 194, cysteine 226/cysteine 354, and cysteine 283/cysteine 329. N-linked (GlcNAc...) asparagine glycans are attached at residues asparagine 241 and asparagine 252. 2 N-linked (GlcNAc...) asparagine glycosylation sites follow: asparagine 386 and asparagine 407. Cystine bridges form between cysteine 455-cysteine 472, cysteine 461-cysteine 506, cysteine 464-cysteine 481, and cysteine 475-cysteine 487. N-linked (GlcNAc...) asparagine glycosylation is found at asparagine 548, asparagine 582, asparagine 653, asparagine 692, asparagine 771, asparagine 796, asparagine 821, asparagine 871, and asparagine 890. Residues 945–965 (WYFLIVLPVLLVIVIFAAVGV) traverse the membrane as a helical segment. The Cytoplasmic segment spans residues 966 to 1568 (TRHKSKELSR…FDEKKKCKWM (603 aa)). The residue at position 978 (serine 978) is a Phosphoserine.

Belongs to the plexin family. As to quaternary structure, monomer. Homodimer. Interacts with SEMA7A. In terms of processing, N-glycosylated. Detected in heart, brain, lung, spleen and placenta.

It is found in the membrane. Receptor for SEMA7A, for smallpox semaphorin A39R, vaccinia virus semaphorin A39R and for herpesvirus Sema protein. Binding of semaphorins triggers cellular responses leading to the rearrangement of the cytoskeleton and to secretion of IL6 and IL8. In Homo sapiens (Human), this protein is Plexin-C1 (PLXNC1).